We begin with the raw amino-acid sequence, 138 residues long: Large-conductance mechanosensitive channel (138 aa).

3 helical membrane-spanning segments follow: residues 19 to 39 (VGVIIGAAFGAIVSSLVGDVI), 40 to 60 (MPVIGAITGGLDFSNYFIGLS), and 81 to 101 (GSFLTVTLNFLIIAFVLFIVI).

This sequence belongs to the MscL family. Homopentamer.

It localises to the cell inner membrane. Functionally, channel that opens in response to stretch forces in the membrane lipid bilayer. May participate in the regulation of osmotic pressure changes within the cell. The chain is Large-conductance mechanosensitive channel from Afipia carboxidovorans (strain ATCC 49405 / DSM 1227 / KCTC 32145 / OM5) (Oligotropha carboxidovorans).